Consider the following 234-residue polypeptide: Glutamine synthetase (234 aa).

The GS catalytic domain maps to 1-234; it reads KAQEPWFGIE…TRLLVETTLL (234 aa). Residues 126–157 are disordered; it reads GSGGHVNFSNRQPESPPAGKQSRSSAKKLGKR.

Belongs to the glutamine synthetase family. In terms of assembly, homooctamer.

It is found in the cytoplasm. It catalyses the reaction L-glutamate + NH4(+) + ATP = L-glutamine + ADP + phosphate + H(+). This is Glutamine synthetase from Dunaliella salina (Green alga).